We begin with the raw amino-acid sequence, 73 residues long: Sec-independent protein translocase protein TatA (73 aa).

Residues 1–21 (MGSFSIWHWMIVLVIVLLVFG) form a helical membrane-spanning segment.

Belongs to the TatA/E family. In terms of assembly, the Tat system comprises two distinct complexes: a TatABC complex, containing multiple copies of TatA, TatB and TatC subunits, and a separate TatA complex, containing only TatA subunits. Substrates initially bind to the TatABC complex, which probably triggers association of the separate TatA complex to form the active translocon.

Its subcellular location is the cell inner membrane. Functionally, part of the twin-arginine translocation (Tat) system that transports large folded proteins containing a characteristic twin-arginine motif in their signal peptide across membranes. TatA could form the protein-conducting channel of the Tat system. This Mesorhizobium japonicum (strain LMG 29417 / CECT 9101 / MAFF 303099) (Mesorhizobium loti (strain MAFF 303099)) protein is Sec-independent protein translocase protein TatA.